The sequence spans 416 residues: Multifunctional CCA protein (416 aa).

Residues Gly8 and Arg11 each coordinate ATP. Gly8 and Arg11 together coordinate CTP. Residues Asp21 and Asp23 each coordinate Mg(2+). Arg91, Arg137, and Arg140 together coordinate ATP. CTP contacts are provided by Arg91, Arg137, and Arg140. The 102-residue stretch at 228 to 329 folds into the HD domain; it reads TGVHTLMVLA…VKIFDKADFW (102 aa).

The protein belongs to the tRNA nucleotidyltransferase/poly(A) polymerase family. Bacterial CCA-adding enzyme type 1 subfamily. In terms of assembly, monomer. Can also form homodimers and oligomers. Mg(2+) is required as a cofactor. Ni(2+) serves as cofactor.

The catalysed reaction is a tRNA precursor + 2 CTP + ATP = a tRNA with a 3' CCA end + 3 diphosphate. The enzyme catalyses a tRNA with a 3' CCA end + 2 CTP + ATP = a tRNA with a 3' CCACCA end + 3 diphosphate. Functionally, catalyzes the addition and repair of the essential 3'-terminal CCA sequence in tRNAs without using a nucleic acid template. Adds these three nucleotides in the order of C, C, and A to the tRNA nucleotide-73, using CTP and ATP as substrates and producing inorganic pyrophosphate. tRNA 3'-terminal CCA addition is required both for tRNA processing and repair. Also involved in tRNA surveillance by mediating tandem CCA addition to generate a CCACCA at the 3' terminus of unstable tRNAs. While stable tRNAs receive only 3'-terminal CCA, unstable tRNAs are marked with CCACCA and rapidly degraded. In Shewanella baltica (strain OS185), this protein is Multifunctional CCA protein.